The sequence spans 655 residues: Archaeal Lon protease (655 aa).

Residues 1–123 (MEENIESVEE…KAEREKRDRS (123 aa)) are Cytoplasmic-facing. 57-64 (GEPGTGKS) contacts ATP. A helical transmembrane segment spans residues 124–144 (RSIMFVIFSVVLLGIIAAIVL). A topological domain (extracellular) is located at residue Arg145. Residues 146 to 166 (SITLIFFAIMAAAFLYMAMAF) traverse the membrane as a helical segment. The Cytoplasmic segment spans residues 167–655 (NPVIRNEKAM…ASTRAGQNVA (489 aa)). One can recognise a Lon proteolytic domain in the interval 433-618 (GSVVGMVNGL…EDVLKVALVN (186 aa)). Catalysis depends on residues Ser525 and Lys568.

This sequence belongs to the peptidase S16 family. Archaeal LonB subfamily. In terms of assembly, homohexamer. Organized in a ring with a central cavity.

Its subcellular location is the cell membrane. Functionally, ATP-dependent serine protease that mediates the selective degradation of mutant and abnormal proteins as well as certain short-lived regulatory proteins. Degrades polypeptides processively. This is Archaeal Lon protease from Thermoplasma volcanium (strain ATCC 51530 / DSM 4299 / JCM 9571 / NBRC 15438 / GSS1).